The primary structure comprises 374 residues: GPN-loop GTPase 1 (374 aa).

Position 2 is an N-acetylalanine (A2). Residue 29–34 participates in GTP binding; the sequence is GSGKTT. The Gly-Pro-Asn (GPN)-loop; involved in dimer interface motif lies at 86-88; that stretch reads GPN. 189–192 contacts GTP; the sequence is NKTD. 3 positions are modified to phosphoserine: S301, S312, and S314. The disordered stretch occupies residues 326 to 354; it reads RGTLDEEDEEADSDTDDIDHRVTEESHEE. T328 is modified (phosphothreonine). The segment covering 330–342 has biased composition (acidic residues); the sequence is DEEDEEADSDTDD. Residue S338 is modified to Phosphoserine. A Phosphothreonine modification is found at T340. Residues 343-354 show a composition bias toward basic and acidic residues; sequence IDHRVTEESHEE.

Belongs to the GPN-loop GTPase family. Heterodimer with GPN3. Binds to RNA polymerase II (RNAPII). Interacts directly with RNAPII subunits RPB4 and RPB7 and the CTD of RPB1. Interacts with XPA. As to expression, expressed ubiquitously.

It localises to the cytoplasm. Its subcellular location is the nucleus. In terms of biological role, small GTPase required for proper nuclear import of RNA polymerase II (RNAPII). May act at an RNAP assembly step prior to nuclear import. Forms an interface between the RNA polymerase II enzyme and chaperone/scaffolding proteins, suggesting that it is required to connect RNA polymerase II to regulators of protein complex formation. May be involved in nuclear localization of XPA. This Homo sapiens (Human) protein is GPN-loop GTPase 1.